Reading from the N-terminus, the 1055-residue chain is Type I restriction enzyme HindI endonuclease subunit (1055 aa).

One can recognise a Helicase ATP-binding domain in the interval 287–468 (TSEKGDRRIG…QDVFGRYVSI (182 aa)).

Belongs to the HsdR family. The type I restriction/modification system is composed of three polypeptides R, M and S; the restriction enzyme has stoichiometry R(2)M(2)S(1) while the methyltransferase is M(2)S(1).

It carries out the reaction Endonucleolytic cleavage of DNA to give random double-stranded fragments with terminal 5'-phosphates, ATP is simultaneously hydrolyzed.. Its function is as follows. The restriction (R) subunit of a type I restriction enzyme that recognizes 5'-RAACN(5)TAG-3' and cleaves a random distance away. Subunit R is required for both nuclease and ATPase activities, but not for modification. After locating a non-methylated recognition site, the enzyme complex serves as a molecular motor that translocates DNA in an ATP-dependent manner until a collision occurs that triggers cleavage. This chain is Type I restriction enzyme HindI endonuclease subunit, found in Haemophilus influenzae (strain ATCC 51907 / DSM 11121 / KW20 / Rd).